We begin with the raw amino-acid sequence, 203 residues long: Outer-membrane lipoprotein carrier protein (203 aa).

Positions Met-1–Ala-21 are cleaved as a signal peptide. A disordered region spans residues Gln-178–Lys-203.

It belongs to the LolA family. As to quaternary structure, monomer.

The protein localises to the periplasm. In terms of biological role, participates in the translocation of lipoproteins from the inner membrane to the outer membrane. Only forms a complex with a lipoprotein if the residue after the N-terminal Cys is not an aspartate (The Asp acts as a targeting signal to indicate that the lipoprotein should stay in the inner membrane). The protein is Outer-membrane lipoprotein carrier protein of Salmonella typhi.